The primary structure comprises 125 residues: Ribonuclease P protein component (125 aa).

This sequence belongs to the RnpA family. As to quaternary structure, consists of a catalytic RNA component (M1 or rnpB) and a protein subunit.

The catalysed reaction is Endonucleolytic cleavage of RNA, removing 5'-extranucleotides from tRNA precursor.. In terms of biological role, RNaseP catalyzes the removal of the 5'-leader sequence from pre-tRNA to produce the mature 5'-terminus. It can also cleave other RNA substrates such as 4.5S RNA. The protein component plays an auxiliary but essential role in vivo by binding to the 5'-leader sequence and broadening the substrate specificity of the ribozyme. This Ruegeria pomeroyi (strain ATCC 700808 / DSM 15171 / DSS-3) (Silicibacter pomeroyi) protein is Ribonuclease P protein component.